Consider the following 400-residue polypeptide: Elongation factor Tu (400 aa).

In terms of domain architecture, tr-type G spans 10-208 (KPHLNVGTIG…TMDSYFPEPQ (199 aa)). The segment at 19–26 (GHIDHGKT) is G1. Position 19–26 (19–26 (GHIDHGKT)) interacts with GTP. Thr-26 lines the Mg(2+) pocket. The interval 60 to 64 (GITIN) is G2. The tract at residues 81–84 (DCPG) is G3. GTP-binding positions include 81-85 (DCPGH) and 136-139 (NKTD). The tract at residues 136–139 (NKTD) is G4. The interval 174–176 (SAL) is G5.

The protein belongs to the TRAFAC class translation factor GTPase superfamily. Classic translation factor GTPase family. EF-Tu/EF-1A subfamily. As to quaternary structure, monomer.

The protein localises to the cytoplasm. It carries out the reaction GTP + H2O = GDP + phosphate + H(+). In terms of biological role, GTP hydrolase that promotes the GTP-dependent binding of aminoacyl-tRNA to the A-site of ribosomes during protein biosynthesis. This is Elongation factor Tu from Thermosipho africanus (strain TCF52B).